Reading from the N-terminus, the 587-residue chain is 2-succinyl-5-enolpyruvyl-6-hydroxy-3-cyclohexene-1-carboxylate synthase (587 aa).

Belongs to the TPP enzyme family. MenD subfamily. As to quaternary structure, homodimer. Requires Mg(2+) as cofactor. The cofactor is Mn(2+). Thiamine diphosphate is required as a cofactor.

It catalyses the reaction isochorismate + 2-oxoglutarate + H(+) = 5-enolpyruvoyl-6-hydroxy-2-succinyl-cyclohex-3-ene-1-carboxylate + CO2. Its pathway is quinol/quinone metabolism; 1,4-dihydroxy-2-naphthoate biosynthesis; 1,4-dihydroxy-2-naphthoate from chorismate: step 2/7. It functions in the pathway cofactor biosynthesis; phylloquinone biosynthesis. Catalyzes the thiamine diphosphate-dependent decarboxylation of 2-oxoglutarate and the subsequent addition of the resulting succinic semialdehyde-thiamine pyrophosphate anion to isochorismate to yield 2-succinyl-5-enolpyruvyl-6-hydroxy-3-cyclohexene-1-carboxylate (SEPHCHC). This is 2-succinyl-5-enolpyruvyl-6-hydroxy-3-cyclohexene-1-carboxylate synthase from Prochlorococcus marinus (strain MIT 9301).